We begin with the raw amino-acid sequence, 150 residues long: UPF0208 membrane protein VS_0999 (150 aa).

The next 2 helical transmembrane spans lie at 42-62 and 70-90; these read FGVK…MVFN and AVVM…WLGN.

The protein belongs to the UPF0208 family.

It localises to the cell inner membrane. The chain is UPF0208 membrane protein VS_0999 from Vibrio atlanticus (strain LGP32) (Vibrio splendidus (strain Mel32)).